A 196-amino-acid polypeptide reads, in one-letter code: NADH-quinone oxidoreductase subunit I (196 aa).

4Fe-4S ferredoxin-type domains are found at residues 54-84 (LNRWPDGLEKCVGCELCAWACPADAIYVEGA) and 104-133 (RVYQINYLRCILCGLCIEACPTRALTMTNE). Positions 64, 67, 70, 74, 113, 116, 119, and 123 each coordinate [4Fe-4S] cluster.

Belongs to the complex I 23 kDa subunit family. As to quaternary structure, NDH-1 is composed of 14 different subunits. Subunits NuoA, H, J, K, L, M, N constitute the membrane sector of the complex. [4Fe-4S] cluster is required as a cofactor.

It localises to the cell membrane. It catalyses the reaction a quinone + NADH + 5 H(+)(in) = a quinol + NAD(+) + 4 H(+)(out). In terms of biological role, NDH-1 shuttles electrons from NADH, via FMN and iron-sulfur (Fe-S) centers, to quinones in the respiratory chain. The immediate electron acceptor for the enzyme in this species is believed to be ubiquinone. Couples the redox reaction to proton translocation (for every two electrons transferred, four hydrogen ions are translocated across the cytoplasmic membrane), and thus conserves the redox energy in a proton gradient. This is NADH-quinone oxidoreductase subunit I from Nocardioides sp. (strain ATCC BAA-499 / JS614).